The primary structure comprises 412 residues: Isocitrate dehydrogenase [NADP] cytoplasmic (412 aa).

Residues threonine 76 to threonine 78 and arginine 83 each bind NADP(+). Residue threonine 78 coordinates substrate. Substrate-binding positions include serine 95–arginine 101, arginine 110, and arginine 133. Aspartate 253 provides a ligand contact to Mn(2+). Lysine 261 provides a ligand contact to NADP(+). Aspartate 276 provides a ligand contact to Mn(2+). NADP(+) is bound by residues glycine 309–histidine 314 and asparagine 327.

This sequence belongs to the isocitrate and isopropylmalate dehydrogenases family. As to quaternary structure, homodimer. The cofactor is Mg(2+). Requires Mn(2+) as cofactor.

It is found in the cytoplasm. It catalyses the reaction D-threo-isocitrate + NADP(+) = 2-oxoglutarate + CO2 + NADPH. In Dictyostelium discoideum (Social amoeba), this protein is Isocitrate dehydrogenase [NADP] cytoplasmic (idhC).